Consider the following 396-residue polypeptide: Ornithine aminotransferase 2 (396 aa).

Lys255 is modified (N6-(pyridoxal phosphate)lysine).

This sequence belongs to the class-III pyridoxal-phosphate-dependent aminotransferase family. OAT subfamily. It depends on pyridoxal 5'-phosphate as a cofactor.

Its subcellular location is the cytoplasm. The catalysed reaction is a 2-oxocarboxylate + L-ornithine = L-glutamate 5-semialdehyde + an L-alpha-amino acid. Its pathway is amino-acid biosynthesis; L-proline biosynthesis; L-glutamate 5-semialdehyde from L-ornithine: step 1/1. Catalyzes the interconversion of ornithine to glutamate semialdehyde. The polypeptide is Ornithine aminotransferase 2 (Staphylococcus aureus (strain MRSA252)).